Here is a 301-residue protein sequence, read N- to C-terminus: Heterogeneous nuclear ribonucleoprotein D-like (301 aa).

A disordered region spans residues 1 to 29 (MEDATEMSGGAEEFAEGSKINASKNQQDD). RRM domains are found at residues 30–112 (GKMF…KGKE) and 115–194 (KKVF…QPKE). 2 disordered regions span residues 194-230 (EVYRQQQQQQKGGKSNASGGRGGGRGRGRGQGQNWNQ) and 269-301 (GYGPGYTDYSGQQSTYGKASRGGGNHQNNYQPY). Positions 212–224 (GGRGGGRGRGRGQ) are enriched in gly residues.

It is found in the nucleus. Its subcellular location is the cytoplasm. In terms of biological role, acts as a transcriptional regulator. Binds DNA and RNA. In Gallus gallus (Chicken), this protein is Heterogeneous nuclear ribonucleoprotein D-like (HNRNPDL).